Here is a 282-residue protein sequence, read N- to C-terminus: Pantothenate synthetase (282 aa).

Residue Met-30 to His-37 coordinates ATP. His-37 functions as the Proton donor in the catalytic mechanism. Gln-61 provides a ligand contact to (R)-pantoate. Residue Gln-61 participates in beta-alanine binding. Gly-147–Asp-150 contacts ATP. Gln-153 contributes to the (R)-pantoate binding site. ATP-binding positions include Val-176 and Met-184–Arg-187.

The protein belongs to the pantothenate synthetase family. Homodimer.

It is found in the cytoplasm. It carries out the reaction (R)-pantoate + beta-alanine + ATP = (R)-pantothenate + AMP + diphosphate + H(+). It functions in the pathway cofactor biosynthesis; (R)-pantothenate biosynthesis; (R)-pantothenate from (R)-pantoate and beta-alanine: step 1/1. Catalyzes the condensation of pantoate with beta-alanine in an ATP-dependent reaction via a pantoyl-adenylate intermediate. In Geotalea daltonii (strain DSM 22248 / JCM 15807 / FRC-32) (Geobacter daltonii), this protein is Pantothenate synthetase.